The sequence spans 194 residues: MTEEAATSKILLFNKWDMSEVVVKDAGMVRYVTITSTEVPSSCGRLTQQQFTKSEMAIVERLINRLMQQEYNTGKKMMCTKMVMDAFDVINKKTKQNPLQVLVDAVANAGPREETVRLKYGGINVPKSVDSAPIRRVNTALRYIALATWKGSHKTKKPAYLVLADELIMAAKGDAKCFSVGKKEEVERIAKSAR.

Belongs to the universal ribosomal protein uS7 family. In terms of assembly, part of the 30S ribosomal subunit.

In terms of biological role, one of the primary rRNA binding proteins, it binds directly to 16S rRNA where it nucleates assembly of the head domain of the 30S subunit. Is located at the subunit interface close to the decoding center. The sequence is that of Small ribosomal subunit protein uS7 from Methanocorpusculum labreanum (strain ATCC 43576 / DSM 4855 / Z).